The following is a 160-amino-acid chain: Nuclear transcription factor Y subunit B-5 (160 aa).

Residues Leu-56–Gly-62 mediate DNA binding. The subunit association domain (SAD) stretch occupies residues Met-83–Val-94.

This sequence belongs to the NFYB/HAP3 subunit family. Heterotrimeric transcription factor composed of three components, NF-YA, NF-YB and NF-YC. NF-YB and NF-YC must interact and dimerize for NF-YA association and DNA binding. In terms of tissue distribution, expressed in flowers and siliques.

The protein resides in the nucleus. Functionally, component of the NF-Y/HAP transcription factor complex. The NF-Y complex stimulates the transcription of various genes by recognizing and binding to a CCAAT motif in promoters. This is Nuclear transcription factor Y subunit B-5 (NFYB5) from Arabidopsis thaliana (Mouse-ear cress).